A 290-amino-acid polypeptide reads, in one-letter code: Ribosomal RNA small subunit methyltransferase A (290 aa).

The S-adenosyl-L-methionine site is built by Asn-27, Leu-29, Gly-54, Glu-75, Asp-100, and Asn-125.

The protein belongs to the class I-like SAM-binding methyltransferase superfamily. rRNA adenine N(6)-methyltransferase family. RsmA subfamily.

The protein localises to the cytoplasm. The catalysed reaction is adenosine(1518)/adenosine(1519) in 16S rRNA + 4 S-adenosyl-L-methionine = N(6)-dimethyladenosine(1518)/N(6)-dimethyladenosine(1519) in 16S rRNA + 4 S-adenosyl-L-homocysteine + 4 H(+). Functionally, specifically dimethylates two adjacent adenosines (A1518 and A1519) in the loop of a conserved hairpin near the 3'-end of 16S rRNA in the 30S particle. May play a critical role in biogenesis of 30S subunits. The chain is Ribosomal RNA small subunit methyltransferase A from Streptococcus thermophilus (strain CNRZ 1066).